Reading from the N-terminus, the 244-residue chain is Methylthioribulose-1-phosphate dehydratase (244 aa).

Substrate is bound at residue Cys89. 2 residues coordinate Zn(2+): His107 and His109. Catalysis depends on Glu130, which acts as the Proton donor/acceptor. Position 192 (His192) interacts with Zn(2+).

The protein belongs to the aldolase class II family. MtnB subfamily. It depends on Zn(2+) as a cofactor.

It localises to the cytoplasm. It carries out the reaction 5-(methylsulfanyl)-D-ribulose 1-phosphate = 5-methylsulfanyl-2,3-dioxopentyl phosphate + H2O. The protein operates within amino-acid biosynthesis; L-methionine biosynthesis via salvage pathway; L-methionine from S-methyl-5-thio-alpha-D-ribose 1-phosphate: step 2/6. In terms of biological role, catalyzes the dehydration of methylthioribulose-1-phosphate (MTRu-1-P) into 2,3-diketo-5-methylthiopentyl-1-phosphate (DK-MTP-1-P). The chain is Methylthioribulose-1-phosphate dehydratase from Saccharomyces cerevisiae (strain AWRI1631) (Baker's yeast).